We begin with the raw amino-acid sequence, 436 residues long: UPF0597 protein YhaM (436 aa).

The protein belongs to the UPF0597 family.

This chain is UPF0597 protein YhaM, found in Escherichia coli O7:K1 (strain IAI39 / ExPEC).